Consider the following 604-residue polypeptide: Sulfite reductase [NADPH] flavoprotein alpha-component (604 aa).

In terms of domain architecture, Flavodoxin-like spans 66-204 (VTVLSASQTG…AANAWTDNIA (139 aa)). FMN is bound by residues 72–77 (SQTGNA), 119–122 (STQG), and 155–164 (LGDSSYPNFC). An FAD-binding FR-type domain is found at 239–453 (ADPFPAALLA…VERNDGFRLP (215 aa)). FAD contacts are provided by residues Thr-327, Gln-361, 391–394 (RLYS), 409–411 (TVG), and 424–427 (GGAS). Residues 524–525 (SR), 530–534 (KIYVQ), and Asp-566 each bind NADP(+). An FAD-binding site is contributed by Tyr-604.

It belongs to the NADPH-dependent sulphite reductase flavoprotein subunit CysJ family. The protein in the N-terminal section; belongs to the flavodoxin family. This sequence in the C-terminal section; belongs to the flavoprotein pyridine nucleotide cytochrome reductase family. In terms of assembly, alpha(8)-beta(8). The alpha component is a flavoprotein, the beta component is a hemoprotein. FAD is required as a cofactor. Requires FMN as cofactor.

It carries out the reaction hydrogen sulfide + 3 NADP(+) + 3 H2O = sulfite + 3 NADPH + 4 H(+). It functions in the pathway sulfur metabolism; hydrogen sulfide biosynthesis; hydrogen sulfide from sulfite (NADPH route): step 1/1. Its function is as follows. Component of the sulfite reductase complex that catalyzes the 6-electron reduction of sulfite to sulfide. This is one of several activities required for the biosynthesis of L-cysteine from sulfate. The flavoprotein component catalyzes the electron flow from NADPH -&gt; FAD -&gt; FMN to the hemoprotein component. In Neisseria meningitidis serogroup C (strain 053442), this protein is Sulfite reductase [NADPH] flavoprotein alpha-component.